An 80-amino-acid polypeptide reads, in one-letter code: uncharacterized protein (80 aa).

This is an uncharacterized protein from Acidianus sp. F28 (AFV-2).